The chain runs to 445 residues: Tubulin beta-1 chain (445 aa).

GTP is bound by residues Gln-11, Glu-69, Ser-138, Gly-142, Thr-143, Gly-144, Asn-204, and Asn-226. Glu-69 provides a ligand contact to Mg(2+). A disordered region spans residues 422–445 (QYQDAGMDDEYGEEYEDEAPAEEE). Residues 427–445 (GMDDEYGEEYEDEAPAEEE) are compositionally biased toward acidic residues.

The protein belongs to the tubulin family. Dimer of alpha and beta chains. A typical microtubule is a hollow water-filled tube with an outer diameter of 25 nm and an inner diameter of 15 nM. Alpha-beta heterodimers associate head-to-tail to form protofilaments running lengthwise along the microtubule wall with the beta-tubulin subunit facing the microtubule plus end conferring a structural polarity. Microtubules usually have 13 protofilaments but different protofilament numbers can be found in some organisms and specialized cells. Mg(2+) serves as cofactor.

Its subcellular location is the cytoplasm. The protein resides in the cytoskeleton. Its function is as follows. Tubulin is the major constituent of microtubules, a cylinder consisting of laterally associated linear protofilaments composed of alpha- and beta-tubulin heterodimers. Microtubules grow by the addition of GTP-tubulin dimers to the microtubule end, where a stabilizing cap forms. Below the cap, tubulin dimers are in GDP-bound state, owing to GTPase activity of alpha-tubulin. This Colletotrichum graminicola (Maize anthracnose fungus) protein is Tubulin beta-1 chain (TUB1).